The chain runs to 302 residues: Probable alpha-L-glutamate ligase (302 aa).

Residues leucine 104–glutamate 287 enclose the ATP-grasp domain. ATP-binding positions include lysine 141, glutamate 178 to tyrosine 179, aspartate 187, and arginine 211 to asparagine 213. The Mg(2+) site is built by aspartate 248, glutamate 260, and asparagine 262. The Mn(2+) site is built by aspartate 248, glutamate 260, and asparagine 262.

It belongs to the RimK family. Mg(2+) is required as a cofactor. Requires Mn(2+) as cofactor.

The polypeptide is Probable alpha-L-glutamate ligase (Chromohalobacter salexigens (strain ATCC BAA-138 / DSM 3043 / CIP 106854 / NCIMB 13768 / 1H11)).